The following is a 211-amino-acid chain: Protein GrpE (211 aa).

The disordered stretch occupies residues 1 to 43 (MTDETTKNGPDATAADAAADAAANVEIDNSVQEEAKQPDPLEL). Over residues 11–23 (DATAADAAADAAA) the composition is skewed to low complexity. The segment covering 33-43 (EEAKQPDPLEL) has biased composition (basic and acidic residues).

The protein belongs to the GrpE family. In terms of assembly, homodimer.

Its subcellular location is the cytoplasm. Its function is as follows. Participates actively in the response to hyperosmotic and heat shock by preventing the aggregation of stress-denatured proteins, in association with DnaK and GrpE. It is the nucleotide exchange factor for DnaK and may function as a thermosensor. Unfolded proteins bind initially to DnaJ; upon interaction with the DnaJ-bound protein, DnaK hydrolyzes its bound ATP, resulting in the formation of a stable complex. GrpE releases ADP from DnaK; ATP binding to DnaK triggers the release of the substrate protein, thus completing the reaction cycle. Several rounds of ATP-dependent interactions between DnaJ, DnaK and GrpE are required for fully efficient folding. This is Protein GrpE from Rhizobium etli (strain ATCC 51251 / DSM 11541 / JCM 21823 / NBRC 15573 / CFN 42).